A 154-amino-acid chain; its full sequence is 6,7-dimethyl-8-ribityllumazine synthase (154 aa).

5-amino-6-(D-ribitylamino)uracil contacts are provided by residues Phe22, 56–58, and 80–82; these read AFE and TVI. 85 to 86 is a (2S)-2-hydroxy-3-oxobutyl phosphate binding site; that stretch reads ST. Residue His88 is the Proton donor of the active site. Phe113 contributes to the 5-amino-6-(D-ribitylamino)uracil binding site. Arg127 serves as a coordination point for (2S)-2-hydroxy-3-oxobutyl phosphate.

The protein belongs to the DMRL synthase family.

The catalysed reaction is (2S)-2-hydroxy-3-oxobutyl phosphate + 5-amino-6-(D-ribitylamino)uracil = 6,7-dimethyl-8-(1-D-ribityl)lumazine + phosphate + 2 H2O + H(+). It participates in cofactor biosynthesis; riboflavin biosynthesis; riboflavin from 2-hydroxy-3-oxobutyl phosphate and 5-amino-6-(D-ribitylamino)uracil: step 1/2. Catalyzes the formation of 6,7-dimethyl-8-ribityllumazine by condensation of 5-amino-6-(D-ribitylamino)uracil with 3,4-dihydroxy-2-butanone 4-phosphate. This is the penultimate step in the biosynthesis of riboflavin. The chain is 6,7-dimethyl-8-ribityllumazine synthase from Lactococcus lactis subsp. cremoris (strain MG1363).